The primary structure comprises 550 residues: MAAKDVKFGDSARKRMVAGVNILADAVKVTLGPKGRNVVLEKSFGAPTVTKDGVSVAKEIELKDKFENMGAQMVKEVASQANETAGDGTTTATVLAQSIVNEGIKAVTAGMNPMDLKRGIDKGTAEAVKAIREMAKPCDDSRMIAQVGTISANGDETIGKIIADAMEKVGKEGVITVEEGRGLEDELDVVEGMQFDRGFLSPYFINNQDNMSAELEDPYILLVDKKISNIRELLPVLEAVAKAGKPLQIIAEDIEGEALATLVVNNMRGIVKVNAVKAPGFGDRRKEMLQDIAILTGGTVISEEVGLTLENTTLDDLGTAKRVNVTKENTTIIGGAGAEADISARVEQIRKQIEDSSSDYDKEKLQERVAKLAGGVAVIKVGAGSEVEMKEKKARVEDALHSTRAAVEEGIVAGGGVTLIRAIAALDKVDAINDEQKAGVNILRRAMEAPLRQIVFNAGGESSVVVAKVKEGEGSFGFNAATEQYGDMLEMGILDPAKVTRSSLQAAASVASLIITTEAMVADEPEDDKAGGGMPDMGGMGGMGGMGGMM.

ATP is bound by residues 30–33, lysine 51, 87–91, glycine 415, 479–481, and aspartate 495; these read TLGP, DGTTT, and NAA.

It belongs to the chaperonin (HSP60) family. As to quaternary structure, forms a cylinder of 14 subunits composed of two heptameric rings stacked back-to-back. Interacts with the co-chaperonin GroES.

The protein localises to the cytoplasm. The catalysed reaction is ATP + H2O + a folded polypeptide = ADP + phosphate + an unfolded polypeptide.. Together with its co-chaperonin GroES, plays an essential role in assisting protein folding. The GroEL-GroES system forms a nano-cage that allows encapsulation of the non-native substrate proteins and provides a physical environment optimized to promote and accelerate protein folding. The chain is Chaperonin GroEL from Marinobacter nauticus (strain ATCC 700491 / DSM 11845 / VT8) (Marinobacter aquaeolei).